We begin with the raw amino-acid sequence, 86 residues long: Putative protein adenylyltransferase MJ1215 (86 aa).

Residues 35-49 (GSYARGEQKETSDID) carry the GSX(10)DXD motif motif. 3 residues coordinate Mg(2+): D47, D49, and D79.

The protein belongs to the MntA antitoxin family. As to quaternary structure, probably forms a complex with cognate toxin MJ1216. Mg(2+) serves as cofactor.

The catalysed reaction is L-tyrosyl-[protein] + ATP = O-(5'-adenylyl)-L-tyrosyl-[protein] + diphosphate. It carries out the reaction O-(5'-adenylyl)-L-tyrosyl-[protein] + ATP = O-[5'-(adenylyl-(5'-&gt;3')-adenylyl)]-L-tyrosyl-[protein] + diphosphate. Functionally, probable antitoxin component of a putative type VII toxin-antitoxin (TA) system. Neutralizes cognate toxic MJ1216 by di-AMPylation. This Methanocaldococcus jannaschii (strain ATCC 43067 / DSM 2661 / JAL-1 / JCM 10045 / NBRC 100440) (Methanococcus jannaschii) protein is Putative protein adenylyltransferase MJ1215.